A 278-amino-acid chain; its full sequence is Pyrroline-5-carboxylate reductase 2 (278 aa).

Belongs to the pyrroline-5-carboxylate reductase family.

The protein resides in the cytoplasm. The enzyme catalyses L-proline + NADP(+) = (S)-1-pyrroline-5-carboxylate + NADPH + 2 H(+). The catalysed reaction is L-proline + NAD(+) = (S)-1-pyrroline-5-carboxylate + NADH + 2 H(+). It participates in amino-acid biosynthesis; L-proline biosynthesis; L-proline from L-glutamate 5-semialdehyde: step 1/1. In terms of biological role, catalyzes the reduction of 1-pyrroline-5-carboxylate (PCA) to L-proline. This chain is Pyrroline-5-carboxylate reductase 2 (proI), found in Bacillus subtilis (strain 168).